The following is a 289-amino-acid chain: Heme oxygenase 1, chloroplastic (289 aa).

Residues 1 to 64 (MAPAAASLTA…SASSSRRMVV (64 aa)) constitute a chloroplast transit peptide. Heme b is bound at residue H96.

The protein belongs to the heme oxygenase family.

The protein resides in the plastid. It is found in the chloroplast. It catalyses the reaction heme b + 3 reduced [NADPH--hemoprotein reductase] + 3 O2 = biliverdin IXalpha + CO + Fe(2+) + 3 oxidized [NADPH--hemoprotein reductase] + 3 H2O + H(+). In terms of biological role, catalyzes the opening of the heme ring to form the open-chain tetrapyrrole biliverdin IX with the release of iron and carbon monoxide (CO). Is a key enzyme in the synthesis of the chromophore of the phytochrome family of plant photoreceptors. Essential for photoperiod response and repression of flowering through cytochromes that inhibit flowering by affecting both HD1 and EHD1 flowering pathways. In Oryza sativa subsp. japonica (Rice), this protein is Heme oxygenase 1, chloroplastic (HO1).